A 92-amino-acid chain; its full sequence is Kinetoplastid membrane protein 11C (92 aa).

This sequence belongs to the KMP-11 family. In terms of assembly, monomer.

It is found in the cytoplasm. It localises to the cytoskeleton. The protein localises to the cell projection. Its subcellular location is the cilium. The protein resides in the flagellum. Its function is as follows. May be involved in the regulation of the cytoskeleton through interaction with the subpellicular microtubules. May be involved in parasite mobility and attachment to the surface of the host cell. Behaves as a strong immunogen during infection. The chain is Kinetoplastid membrane protein 11C (KMP-11C) from Leishmania infantum.